A 759-amino-acid chain; its full sequence is LIM domain and actin-binding protein 1 (759 aa).

Residue Met1 is modified to N-acetylmethionine. Phosphoserine occurs at positions 4, 15, and 55. The tract at residues 78–131 is disordered; that stretch reads NPGLGAESHTDSLRNSSTEIRHRADHPPAEVTSHAASGAKADQEEQIHPRSRLR. The segment covering 96-105 has biased composition (basic and acidic residues); that stretch reads EIRHRADHPP. Ser132 carries the phosphoserine modification. Residues 146 to 177 are compositionally biased toward basic and acidic residues; that stretch reads KDGEDLKDHSTESKKMENCLGESRHEVEKSEI. The disordered stretch occupies residues 146–182; that stretch reads KDGEDLKDHSTESKKMENCLGESRHEVEKSEISENTD. The Required for interaction with NPC1L1 signature appears at 164-166; the sequence is CLG. A phosphoserine mark is found at Ala183 and Ser225. Disordered regions lie at residues 211 to 264 and 323 to 381; these read ILRA…RLSE and EKIS…AMKK. The residue at position 229 (Tyr229) is a Phosphotyrosine. 2 positions are modified to phosphoserine: Ser230 and Ser242. Residues 247-258 show a composition bias toward basic and acidic residues; that stretch reads DSEKNESRRNLE. Ser263, Ser343, Ser350, Ser362, Ser365, Ser369, and Ser374 each carry phosphoserine. The span at 362–376 shows a compositional bias: low complexity; sequence SPDSRASSLSESSPP. In terms of domain architecture, LIM zinc-binding spans 388-448; the sequence is ETCVECQKTV…KPHFNQLFKS (61 aa). Lys439 is subject to N6-succinyllysine. Phosphoserine is present on Ser490. Residues 493-513 are required for interaction with MYO5B; that stretch reads VEDAPIAKVGVLAASMEAKAS. The tract at residues 509–709 is disordered; the sequence is EAKASSQQEK…QEPKSLNWSS (201 aa). Composition is skewed to basic and acidic residues over residues 516 to 527 and 556 to 567; these read QEKEDKPAETKK and WPPEDEISKPEV. Over residues 595–607 the composition is skewed to polar residues; it reads ASFQSTSVKSPKT. Ser601, Ser604, Ser609, and Ser617 each carry phosphoserine. Over residues 644–655 the composition is skewed to polar residues; it reads KNGNVGKTTWQN. Over residues 656 to 673 the composition is skewed to basic and acidic residues; the sequence is KESKGETGKRSKEGHSLE. The span at 674–691 shows a compositional bias: acidic residues; it reads MENENLVENGADSDEDDN. 5 positions are modified to phosphoserine: Ser686, Ser692, Ser698, Ser726, and Ser741. Residues 693 to 709 are compositionally biased toward polar residues; sequence FLKQQSPQEPKSLNWSS.

As to quaternary structure, interacts with NPC1L1; bridges NPC1L1 with MYO5B. Interacts with MYO5B; bridges NPC1L1 with MYO5B. Interacts with PXN; this complex stabilizes actin dynamics. Interacts with F-actin and G-actin. Interacts with LUZP1 (via C-terminus); both proteins restrict ciliation and may work together to regulate this process. Binds RAB40B (GTP-bound); interaction influences LIMA1 subcellular localization in lamellipodia during cell migration. Post-translationally, ubiquitinated by the ECS(RAB40B) complex leading to its degradation. In terms of processing, phosphorylation of the C-terminal region by MAPK1/MAPK3 reduces its association with F-actin and contributes to actin filament reorganization and enhances cell motility. In terms of tissue distribution, highly expressed in placenta, kidney, pancreas, prostate, ovary, spleen and heart. Also detected in lung, liver, brain, skeletal muscle, thymus, testis and intestine. Not detected in leukocytes. Isoform Beta expressed generally at very low levels. Isoform Alpha abundant in epithelial cells from mammary gland, prostate and in normal oral keratinocytes. Low levels in aortic endothelial cells and dermal fibroblasts. Not detectable in myocardium.

It localises to the cytoplasm. Its subcellular location is the cell junction. The protein localises to the focal adhesion. The protein resides in the cytoskeleton. It is found in the stress fiber. It localises to the cell membrane. Its subcellular location is the cell projection. The protein localises to the ruffle. The protein resides in the lamellipodium. Functionally, actin-binding protein involved in actin cytoskeleton regulation and dynamics. Increases the number and size of actin stress fibers and inhibits membrane ruffling. Inhibits actin filament depolymerization. Bundles actin filaments, delays filament nucleation and reduces formation of branched filaments. Acts as a negative regulator of primary cilium formation. Plays a role in cholesterol homeostasis. Influences plasma cholesterol levels through regulation of intestinal cholesterol absorption. May act as a scaffold protein by regulating NPC1L1 transportation, an essential protein for cholesterol absorption, to the plasma membrane by recruiting MYO5B to NPC1L1, and thus facilitates cholesterol uptake. The sequence is that of LIM domain and actin-binding protein 1 from Homo sapiens (Human).